The primary structure comprises 196 residues: SPRY domain-containing protein 7 (196 aa).

The 184-residue stretch at 1 to 184 (MAASVFCCLR…FSEFYHTPPP (184 aa)) folds into the B30.2/SPRY domain.

This Gallus gallus (Chicken) protein is SPRY domain-containing protein 7 (SPRYD7).